The sequence spans 182 residues: Isopentenyl-diphosphate Delta-isomerase (182 aa).

Positions 25 and 32 each coordinate Mn(2+). A Nudix hydrolase domain is found at 30–164 (RLHLAFSSWL…PWAFSPWMVM (135 aa)). Cys-67 is a catalytic residue. His-69 is a binding site for Mn(2+). Glu-87 is a Mg(2+) binding site. Residues Glu-114 and Glu-116 each coordinate Mn(2+). Glu-116 is a catalytic residue.

It belongs to the IPP isomerase type 1 family. Homodimer. Mg(2+) serves as cofactor. Requires Mn(2+) as cofactor.

It is found in the cytoplasm. It carries out the reaction isopentenyl diphosphate = dimethylallyl diphosphate. Its pathway is isoprenoid biosynthesis; dimethylallyl diphosphate biosynthesis; dimethylallyl diphosphate from isopentenyl diphosphate: step 1/1. Catalyzes the 1,3-allylic rearrangement of the homoallylic substrate isopentenyl (IPP) to its highly electrophilic allylic isomer, dimethylallyl diphosphate (DMAPP). The polypeptide is Isopentenyl-diphosphate Delta-isomerase (Escherichia coli O139:H28 (strain E24377A / ETEC)).